We begin with the raw amino-acid sequence, 1288 residues long: Photoreceptor cilium actin regulator (1288 aa).

Glycine 2 is lipidated: N-myristoyl glycine. Cysteine 3 carries S-palmitoyl cysteine lipidation. Disordered regions lie at residues 78-147, 368-401, 423-453, 467-527, 563-605, 686-707, 813-1109, 1132-1169, and 1190-1288; these read MGDP…KWKR, QTSW…QQSP, QPRA…LGTS, PHLS…PFQA, DWSE…SHVE, QKCN…NAIP, AAKS…EDSQ, EAKP…SSGP, and LRRT…EEVS. 3 stretches are compositionally biased toward polar residues: residues 96 to 109, 382 to 401, and 434 to 453; these read TKTS…SQSH, SVTS…QQSP, and CLSS…LGTS. Positions 483–495 are enriched in acidic residues; that stretch reads DSEDSSPEEEEED. Polar residues-rich tracts occupy residues 848 to 857, 894 to 904, 927 to 946, and 966 to 976; these read SPESSKSTEN, SKSTASLTKPH, PPAT…QAEK, and PSGQNRTSESS. Residues 1018–1028 show a composition bias toward low complexity; sequence PAQPSPSAVQT. Composition is skewed to pro residues over residues 1051–1063 and 1071–1094; these read PHQP…PPES and PSPP…PPMS. A compositionally biased stretch (basic and acidic residues) spans 1097 to 1106; the sequence is QEHKETRDSE. Positions 1209-1226 are enriched in polar residues; it reads DPTSTSYESQLGQNSSSE. Positions 1268-1277 are enriched in basic and acidic residues; that stretch reads RTGHIQDKSQ. Positions 1278-1288 are enriched in polar residues; it reads PEAQPQQEEVS.

As to expression, specifically expressed in retina.

The protein resides in the cell projection. It is found in the cilium. The protein localises to the photoreceptor outer segment. Its subcellular location is the photoreceptor inner segment. Plays an essential role for normal photoreceptor cell maintenance and vision. This is Photoreceptor cilium actin regulator from Homo sapiens (Human).